We begin with the raw amino-acid sequence, 155 residues long: Pathogenesis-related protein STH-2 (155 aa).

The protein belongs to the BetVI family.

The polypeptide is Pathogenesis-related protein STH-2 (STH-2) (Solanum tuberosum (Potato)).